A 361-amino-acid polypeptide reads, in one-letter code: Inner kinetochore subunit CNN1 (361 aa).

The disordered stretch occupies residues 1-22 (MSTPRKAAGNNENTEVSEIRTP). Ser2 is modified (phosphoserine; by CDK1). At Thr14 the chain carries Phosphothreonine; by CDK1 and MPS1. Ser17 is modified (phosphoserine; by CDK1 and MPS1). 2 positions are modified to phosphothreonine; by CDK1: Thr21 and Thr42. Ser50 carries the post-translational modification Phosphoserine; by CDK1 and MPS1. The residue at position 52 (Ser52) is a Phosphoserine; by CDK1. Residue Thr53 is modified to Phosphothreonine; by MPS1. Phosphoserine; by CDK1 is present on Ser55. Residues 60–84 (NKDPNEVRSFLQDLSQVLARKSQGN) form an interacts with the NDC80 complex subunits SPC24 and SPC25 and with the KNL1 complex region. Ser74 carries the post-translational modification Phosphoserine; by CDK1 and MPS1. Phosphothreonine; by MPS1 is present on residues Thr86 and Thr88. Residue Thr91 is modified to Phosphothreonine; by CDK1 and MPS1. The tract at residues 103 to 132 (EESQPEENELLRSRSEKLTDNNIGNETQPD) is disordered. The segment covering 111 to 121 (ELLRSRSEKLT) has biased composition (basic and acidic residues). Ser115 carries the post-translational modification Phosphoserine; by CDK1. Residues 122–132 (DNNIGNETQPD) show a composition bias toward polar residues. Residue Thr129 is modified to Phosphothreonine; by CDK1 and MPS1. Thr134 bears the Phosphothreonine; by MPS1 mark. A Phosphoserine; by MPS1 modification is found at Ser135. At Thr139 the chain carries Phosphothreonine; by CDK1 and MPS1. Phosphoserine; by MPS1 is present on Ser153. Thr174 carries the post-translational modification Phosphothreonine; by MPS1. Residue Ser177 is modified to Phosphoserine; by CDK1. Residue Thr191 is modified to Phosphothreonine; by CDK1. Ser192 is modified (phosphoserine; by CDK1). The segment at 193-255 (PSIGMDQVDE…SDENLDDIGN (63 aa)) is disordered. Positions 219–254 (PLSEDLPSDDKEETEEAENEDYSFENTSDENLDDIG) are enriched in acidic residues. Ser268 carries the phosphoserine; by CDK1 modification. Ser269 is subject to Phosphoserine; by MPS1 and IPL1.

It belongs to the CENP-T/CNN1 family. In terms of assembly, component of the inner kinetochore constitutive centromere-associated network (CCAN) (also known as central kinetochore CTF19 complex in yeast), which is composed of at least AME1, CHL4, CNN1, CTF3, CTF19, IML3, MCM16, MCM21, MCM22, MHF1, MHF2, MIF2, NKP1, NKP2, OKP1 and WIP1. Interacts (via N-terminus) with the outer kinetochore NDC80 complex subunits SPC24 (via C-terminus) and SPC25 (via C-terminus); the interaction is direct and contributes to the correct spatiotemporal organization of the KMN network. Interacts with outer kinetochore MIS12 complex subunit NNF1. Interacts (via N-terminus) with the KNL1 complex. In terms of processing, phosphorylation of the C-terminus by MPS1 kinase regulates interaction with the outer kinetochore Ndc80 complex. Phosphorylation levels rise from S-phase and through metaphase, the protein is thendephosphorylated in anaphase.

The protein resides in the nucleus. It localises to the chromosome. It is found in the centromere. Its subcellular location is the kinetochore. Component of the kinetochore, a multiprotein complex that assembles on centromeric DNA and attaches chromosomes to spindle microtubules, mediating chromosome segregation and sister chromatid segregation during meiosis and mitosis. Component of the inner kinetochore constitutive centromere-associated network (CCAN), which serves as a structural platform for outer kinetochore assembly. Modulates outer kinetochore KMN network activity by regulating interactions within the network. This is Inner kinetochore subunit CNN1 (CNN1) from Saccharomyces cerevisiae (strain ATCC 204508 / S288c) (Baker's yeast).